Here is a 170-residue protein sequence, read N- to C-terminus: Lipoprotein signal peptidase (170 aa).

4 helical membrane passes run 11 to 31, 41 to 61, 69 to 89, and 95 to 115; these read LSWLWLSLLVLVIDQASKFYF, IVVIPDLFSWTLAYNTGAAFS, WQRWLFALIAIAVSAVLVVWL, and NETWLAIALALVLGGALGNLY. Active-site residues include Asp125 and Asp144. The helical transmembrane segment at 136–156 threads the bilayer; it reads YFPAFNFADSAITVGAVMLAL.

It belongs to the peptidase A8 family.

It localises to the cell inner membrane. It catalyses the reaction Release of signal peptides from bacterial membrane prolipoproteins. Hydrolyzes -Xaa-Yaa-Zaa-|-(S,diacylglyceryl)Cys-, in which Xaa is hydrophobic (preferably Leu), and Yaa (Ala or Ser) and Zaa (Gly or Ala) have small, neutral side chains.. It participates in protein modification; lipoprotein biosynthesis (signal peptide cleavage). This protein specifically catalyzes the removal of signal peptides from prolipoproteins. The polypeptide is Lipoprotein signal peptidase (Pseudomonas fluorescens (strain Pf0-1)).